Here is a 160-residue protein sequence, read N- to C-terminus: uncharacterized protein (160 aa).

It to A.fulgidus AF1717.

This is an uncharacterized protein from Bacillus subtilis (strain 168).